The chain runs to 117 residues: Large ribosomal subunit protein bL19 (117 aa).

The protein belongs to the bacterial ribosomal protein bL19 family.

Its function is as follows. This protein is located at the 30S-50S ribosomal subunit interface and may play a role in the structure and function of the aminoacyl-tRNA binding site. This Paenarthrobacter aurescens (strain TC1) protein is Large ribosomal subunit protein bL19.